Consider the following 491-residue polypeptide: Angiopoietin-related protein 1 (491 aa).

An N-terminal signal peptide occupies residues 1–23; it reads MKTFTWTLGVLFFLLVDTGHCRG. Residues 80-168 are a coiled coil; that stretch reads ITRMDLENLK…LNVTTEMLKM (89 aa). 2 N-linked (GlcNAc...) asparagine glycosylation sites follow: Asn160 and Asn188. The Fibrinogen C-terminal domain maps to 271–491; sequence FINEGPFKDC…AVQMMIKPID (221 aa). Cystine bridges form between Cys280/Cys309 and Cys432/Cys445.

As to expression, highly expressed in adrenal gland, placenta, thyroid gland, heart, skeletal muscle and small intestine. Weakly expressed in testis, ovary, colon, pancreas, kidney and stomach.

The protein resides in the secreted. This chain is Angiopoietin-related protein 1 (ANGPTL1), found in Homo sapiens (Human).